Here is a 198-residue protein sequence, read N- to C-terminus: Superoxide dismutase [Fe] (198 aa).

Residues H27, H74, D158, and H162 each coordinate Fe cation.

Belongs to the iron/manganese superoxide dismutase family. As to quaternary structure, homodimer. Requires Fe cation as cofactor.

Its subcellular location is the cytoplasm. The enzyme catalyses 2 superoxide + 2 H(+) = H2O2 + O2. Its function is as follows. Destroys superoxide anion radicals which are normally produced within the cells and which are toxic to biological systems. The sequence is that of Superoxide dismutase [Fe] (SODB) from Plasmodium falciparum (isolate HB3).